The following is a 223-amino-acid chain: Ras-related protein Rab-21 (223 aa).

A2 bears the N-acetylalanine mark. Positions 26, 29, 30, 31, 32, 43, 44, 46, 48, and 49 each coordinate GTP. Residue T31 participates in Mg(2+) binding. Residues 41–54 (KFNDKHITTLQASF) carry the Switch 1 motif. Residues T49 and D72 each contribute to the Mg(2+) site. The short motif at 74–92 (AGQERFHALGPIYYRDSNG) is the Switch 2 element. 6 residues coordinate GTP: G75, N130, K131, D133, A161, and K162. S-geranylgeranyl cysteine attachment occurs at residues C219 and C220. C220 bears the Cysteine methyl ester mark. Residues 221 to 223 (SSG) constitute a propeptide, removed in mature form.

Belongs to the small GTPase superfamily. Rab family. In terms of assembly, interacts with the cytoplasmic tail of integrins ITGA1, ITGA2, ITGA5, ITGA6, ITGA11 and ITGB1; this interaction is dependent upon its GDP/GTP cycle. Interacts with RABGEF1 (via VPS9 domain). Interacts with ANKRD27. Interacts (in GTP-bound form) with VAMP8 in response to starvation; the interaction probably regulates VAMP8 endolysosomal trafficking. Interacts (active GTP-bound form) with TMED10; the interaction is indirect and regulates TMED10 abundance and localization at the Golgi. Requires Mg(2+) as cofactor.

Its subcellular location is the endoplasmic reticulum membrane. The protein resides in the golgi apparatus. It is found in the trans-Golgi network. It localises to the golgi apparatus membrane. The protein localises to the early endosome membrane. Its subcellular location is the cytoplasmic vesicle membrane. The protein resides in the cleavage furrow. It is found in the cell projection. It localises to the neuron projection. It catalyses the reaction GTP + H2O = GDP + phosphate + H(+). Its activity is regulated as follows. Regulated by guanine nucleotide exchange factors (GEFs) including ANKRD27 and RABGEF1, which promote the exchange of bound GDP for free GTP. Regulated by GTPase activating proteins (GAPs) which increase the GTP hydrolysis activity. Inhibited by GDP dissociation inhibitors (GDIs). The small GTPases Rab are key regulators of intracellular membrane trafficking, from the formation of transport vesicles to their fusion with membranes. Rabs cycle between an inactive GDP-bound form and an active GTP-bound form that is able to recruit to membranes different sets of downstream effectors directly responsible for vesicle formation, movement, tethering and fusion. RAB21 is involved in membrane trafficking control. Regulates integrin internalization and recycling, but does not influence the traffic of endosomally translocated receptors in general. As a result, may regulate cell adhesion and migration. During the mitosis of adherent cells, controls the endosomal trafficking of integrins which is required for the successful completion of cytokinesis. Involved in neurite growth. Following SBF2/MTMT13-mediated activation in response to starvation-induced autophagy, binds to and regulates SNARE protein VAMP8 endolysosomal transport required for SNARE-mediated autophagosome-lysosome fusion. Modulates protein levels of the cargo receptors TMED2 and TMED10, and required for appropriate Golgi localization of TMED10. This chain is Ras-related protein Rab-21, found in Rattus norvegicus (Rat).